A 522-amino-acid polypeptide reads, in one-letter code: Maturase K (522 aa).

The protein belongs to the intron maturase 2 family. MatK subfamily.

It localises to the plastid. It is found in the chloroplast. In terms of biological role, usually encoded in the trnK tRNA gene intron. Probably assists in splicing its own and other chloroplast group II introns. This is Maturase K from Iris orientalis (Yellowband iris).